The primary structure comprises 549 residues: MTLASIRRGYHVIKTLLQYGLDDVLPPKMTPWYFKLARNSLFWIRNKHKNKPGGERLKLAMQELGPVYIKLGQMLSTRRDLLSDEWASELAMLQDKVPPFDGALARQAIEAELKAPIESLFDDFNEIPLASASISQVHTATLKSNGKDVVLKVLRPNVETKIQADLQLMSQTAKLIEYLLGEGNRLRPAEVIEDYRVTILGELNLKLEALNAVKLRNNFLDSDALYVPYVYEEFCYPRLMVMERIYGISVSDIAALKAQGTNFKLLAERGVELFFTQVFRDNFFHADMHPGNIFISRDHPENPYYIGLDCGIMGTLSEVDKRYLAENFLAFFNRDYHRIAQLYIESGWVSEKTDLQAFEQAIKVVCEPMFNKPLDEISFGHVLLELFRTARHFDIVVQPQLVLLEKTLLYIEGLGRQLYPQLDLWQTAKPFLEQWMADQVGPKAMFKKVSTKLPYWADKLPEFPELIYDNLKLGRKLLSSQQQMLDKYLKYQQQAHKSNYLLITSAVLLICGTLLINRDATLWTPYVCLVSGIILWFVGWRSRPKNRKF.

Residues 123–501 (DFNEIPLASA…QQQAHKSNYL (379 aa)) form the Protein kinase domain. ATP contacts are provided by residues 129–137 (LASASISQV) and Lys152. Catalysis depends on Asp287, which acts as the Proton acceptor. Helical transmembrane passes span 496–516 (HKSN…TLLI) and 520–540 (ATLW…FVGW).

It belongs to the ABC1 family. UbiB subfamily.

Its subcellular location is the cell inner membrane. It functions in the pathway cofactor biosynthesis; ubiquinone biosynthesis [regulation]. Functionally, is probably a protein kinase regulator of UbiI activity which is involved in aerobic coenzyme Q (ubiquinone) biosynthesis. The sequence is that of Probable protein kinase UbiB from Shewanella baltica (strain OS223).